Reading from the N-terminus, the 198-residue chain is Ribonuclease HII (198 aa).

An RNase H type-2 domain is found at 10–198; the sequence is HLVAGVDEVG…PVKRALELAS (189 aa). Positions 16, 17, and 108 each coordinate a divalent metal cation.

Belongs to the RNase HII family. Requires Mn(2+) as cofactor. It depends on Mg(2+) as a cofactor.

Its subcellular location is the cytoplasm. It catalyses the reaction Endonucleolytic cleavage to 5'-phosphomonoester.. Functionally, endonuclease that specifically degrades the RNA of RNA-DNA hybrids. The sequence is that of Ribonuclease HII from Salmonella arizonae (strain ATCC BAA-731 / CDC346-86 / RSK2980).